The sequence spans 298 residues: Ribosomal protein L11 methyltransferase (298 aa).

Residues Thr-150, Gly-171, Asp-193, and Asn-232 each contribute to the S-adenosyl-L-methionine site.

The protein belongs to the methyltransferase superfamily. PrmA family.

The protein resides in the cytoplasm. It catalyses the reaction L-lysyl-[protein] + 3 S-adenosyl-L-methionine = N(6),N(6),N(6)-trimethyl-L-lysyl-[protein] + 3 S-adenosyl-L-homocysteine + 3 H(+). In terms of biological role, methylates ribosomal protein L11. This is Ribosomal protein L11 methyltransferase from Chromobacterium violaceum (strain ATCC 12472 / DSM 30191 / JCM 1249 / CCUG 213 / NBRC 12614 / NCIMB 9131 / NCTC 9757 / MK).